Here is a 126-residue protein sequence, read N- to C-terminus: Small ribosomal subunit protein bS6 (126 aa).

The interval 104 to 126 (LARRDRGDRPERPREDFGAQAQA) is disordered. Positions 105-120 (ARRDRGDRPERPREDF) are enriched in basic and acidic residues.

Belongs to the bacterial ribosomal protein bS6 family.

Binds together with bS18 to 16S ribosomal RNA. This Caulobacter vibrioides (strain ATCC 19089 / CIP 103742 / CB 15) (Caulobacter crescentus) protein is Small ribosomal subunit protein bS6.